The primary structure comprises 641 residues: Epithelial sodium channel subunit beta (641 aa).

Topologically, residues 1–50 (MHLKKYLLKGLHRLQKGPGYSYKELLVWYCNNTNTHGPKRIICEGPKKKA) are cytoplasmic. A helical membrane pass occupies residues 51 to 71 (MWFLITLLFTSLVCWQWGVFI). Over 72–533 (RTYLSWEVSV…GGQFGFWMGG (462 aa)) the chain is Extracellular. Disulfide bonds link C98-C273, C185-C190, C197-C204, C250-C257, C362-C449, C387-C445, C391-C441, C400-C427, and C402-C416. N141 carries an N-linked (GlcNAc...) asparagine glycan. N261 is a glycosylation site (N-linked (GlcNAc...) asparagine). A helical transmembrane segment spans residues 534-554 (SVLCLIEFGEILIDFVWITII). Over 555-641 (KLVAFAKSLR…IESDSEGDAI (87 aa)) the chain is Cytoplasmic. Residues 593-624 (PDVARPGPDPGTYPDEQTLPIPGTPPPNYDSL) form a disordered region. The short motif at 617–621 (PPPNY) is the PY motif; recruits WW domain-containing proteins and is thereby required for ubiquitination and inhibition of the channel by NEDD4 and NEDD4L element. Phosphoserine occurs at positions 634 and 636.

Belongs to the amiloride-sensitive sodium channel (TC 1.A.6) family. SCNN1B subfamily. Component of the heterotrimeric epithelial sodium channel (ENaC) composed of an alpha/SCNN1A, a beta/SCNN1B and a gamma/SCNN1G subunit. An additional delta/SCNN1D subunit can replace the alpha/SCNN1A subunit to form an alternative channel with specific properties. Interacts with WWP1 (via WW domains). Interacts with WWP2 (via WW domains); inhibits the channel. Interacts with the full-length immature form of PCSK9 (pro-PCSK9). Interacts (N-glycosylated) with BPIFA1; the interaction is direct and inhibits the proteolytic processing of SCNN1A and SCNN1G and the activation of ENaC. Post-translationally, ubiquitinated. Can be ubiquitinated at multiple sites and undergo monoubiquitination and polyubiquitination. Ubiquitination by NEDD4 or NEDD4L inhibits the ENaC channel through endocytosis, intracellular retention and degradation of its individual subunits. However, some studies could not confirm the ubiquitination of this subunit of the ENaC. In terms of processing, phosphorylated on serine and threonine residues. Aldosterone and insulin increase the basal level of phosphorylation. N-glycosylated. N-glycosylation is required for interaction with BPIFA1.

It localises to the apical cell membrane. It is found in the cytoplasmic vesicle membrane. It catalyses the reaction Na(+)(in) = Na(+)(out). With respect to regulation, originally identified and characterized by its inhibition by the diuretic drug amiloride. In terms of biological role, this is one of the three pore-forming subunits of the heterotrimeric epithelial sodium channel (ENaC), a critical regulator of sodium balance and fluid homeostasis. ENaC operates in epithelial tissues, where it mediates the electrodiffusion of sodium ions from extracellular fluid through the apical membrane of cells, with water following osmotically. It plays a key role in maintaining sodium homeostasis through electrogenic sodium reabsorption in the kidneys. Additionally, ENaC is essential for airway surface liquid homeostasis, which is crucial for proper mucus clearance. This Canis lupus familiaris (Dog) protein is Epithelial sodium channel subunit beta.